A 316-amino-acid polypeptide reads, in one-letter code: uncharacterized protein (316 aa).

To yeast YGR277c.

This is an uncharacterized protein from Schizosaccharomyces pombe (strain 972 / ATCC 24843) (Fission yeast).